The chain runs to 492 residues: Catalase isozyme 3 (492 aa).

Active-site residues include H65 and N138. Residue Y347 coordinates heme.

It belongs to the catalase family. In terms of assembly, homotetramer. Requires heme as cofactor. Abundant in green cotyledons, etiolated cotyledons, green hypocotyl and root, but not in young leaf.

It is found in the peroxisome. The enzyme catalyses 2 H2O2 = O2 + 2 H2O. Its function is as follows. Occurs in almost all aerobically respiring organisms and serves to protect cells from the toxic effects of hydrogen peroxide. This Cucurbita pepo (Vegetable marrow) protein is Catalase isozyme 3 (CAT3).